Consider the following 2833-residue polypeptide: Reticulocyte-binding protein 1 (2833 aa).

The signal sequence occupies residues M1–G22. Residues E75 to H91 are compositionally biased toward basic and acidic residues. 3 disordered regions span residues E75 to F95, H112 to E133, and K819 to R860. Basic and acidic residues predominate over residues K819–S836. Residues V837–Q849 are compositionally biased toward acidic residues. The Cell attachment site signature appears at R2563 to D2565. Residues E2619–S2755 form a disordered region. Basic and acidic residues-rich tracts occupy residues N2621–A2633 and E2640–V2652. The span at M2655–E2670 shows a compositional bias: polar residues. Residues L2706 to M2720 show a composition bias toward acidic residues. Residues T2731–N2742 are compositionally biased toward basic and acidic residues. The span at T2743–S2755 shows a compositional bias: polar residues.

Homodimer.

The protein localises to the membrane. Its function is as follows. Involved in reticulocyte adhesion. Specifically binds to human reticulocyte cells. The polypeptide is Reticulocyte-binding protein 1 (RBP1) (Plasmodium vivax (strain Belem)).